The primary structure comprises 413 residues: NAD-dependent dihydropyrimidine dehydrogenase subunit PreT homolog (413 aa).

Position 287 (glutamate 287) interacts with NAD(+).

It belongs to the NADH dehydrogenase family. In terms of assembly, heterotetramer of 2 PreA and 2 PreT subunits.

It catalyses the reaction 5,6-dihydrouracil + NAD(+) = uracil + NADH + H(+). The catalysed reaction is 5,6-dihydrothymine + NAD(+) = thymine + NADH + H(+). In terms of biological role, involved in pyrimidine base degradation. Catalyzes physiologically the reduction of uracil to 5,6-dihydrouracil (DHU) by using NADH as a specific cosubstrate. It also catalyzes the reverse reaction and the reduction of thymine to 5,6-dihydrothymine (DHT). This is NAD-dependent dihydropyrimidine dehydrogenase subunit PreT homolog (preT) from Salmonella typhi.